We begin with the raw amino-acid sequence, 390 residues long: Homoserine O-acetyltransferase (390 aa).

Residues Asn55–Leu366 enclose the AB hydrolase-1 domain. Ser163 (nucleophile) is an active-site residue. Arg232 is a binding site for substrate. Residues Asp329 and His362 contribute to the active site. Substrate is bound at residue Asp363.

It belongs to the AB hydrolase superfamily. MetX family. As to quaternary structure, homodimer.

The protein localises to the cytoplasm. It carries out the reaction L-homoserine + acetyl-CoA = O-acetyl-L-homoserine + CoA. It participates in amino-acid biosynthesis; L-methionine biosynthesis via de novo pathway; O-acetyl-L-homoserine from L-homoserine: step 1/1. Functionally, transfers an acetyl group from acetyl-CoA to L-homoserine, forming acetyl-L-homoserine. The chain is Homoserine O-acetyltransferase from Desulfotalea psychrophila (strain LSv54 / DSM 12343).